Reading from the N-terminus, the 122-residue chain is Small ribosomal subunit protein uS13c (122 aa).

The protein belongs to the universal ribosomal protein uS13 family. As to quaternary structure, part of the 30S ribosomal subunit.

The protein resides in the plastid. Its subcellular location is the chloroplast. Located at the top of the head of the 30S subunit, it contacts several helices of the 16S rRNA. The polypeptide is Small ribosomal subunit protein uS13c (Cyanidium caldarium (Red alga)).